A 286-amino-acid chain; its full sequence is Homoserine kinase (286 aa).

ATP is bound at residue 78-88; it reads PVAHGLGSSSS.

Belongs to the GHMP kinase family. Homoserine kinase subfamily.

It is found in the cytoplasm. It carries out the reaction L-homoserine + ATP = O-phospho-L-homoserine + ADP + H(+). Its pathway is amino-acid biosynthesis; L-threonine biosynthesis; L-threonine from L-aspartate: step 4/5. Catalyzes the ATP-dependent phosphorylation of L-homoserine to L-homoserine phosphate. In Limosilactobacillus fermentum (strain NBRC 3956 / LMG 18251) (Lactobacillus fermentum), this protein is Homoserine kinase.